A 333-amino-acid polypeptide reads, in one-letter code: Acetyl-coenzyme A carboxylase carboxyl transferase subunit alpha (333 aa).

A CoA carboxyltransferase C-terminal domain is found at 48 to 308 (ALEVKVETLR…KEMLIEELRI (261 aa)).

Belongs to the AccA family. In terms of assembly, acetyl-CoA carboxylase is a heterohexamer composed of biotin carboxyl carrier protein (AccB), biotin carboxylase (AccC) and two subunits each of ACCase subunit alpha (AccA) and ACCase subunit beta (AccD).

It localises to the cytoplasm. The enzyme catalyses N(6)-carboxybiotinyl-L-lysyl-[protein] + acetyl-CoA = N(6)-biotinyl-L-lysyl-[protein] + malonyl-CoA. The protein operates within lipid metabolism; malonyl-CoA biosynthesis; malonyl-CoA from acetyl-CoA: step 1/1. In terms of biological role, component of the acetyl coenzyme A carboxylase (ACC) complex. First, biotin carboxylase catalyzes the carboxylation of biotin on its carrier protein (BCCP) and then the CO(2) group is transferred by the carboxyltransferase to acetyl-CoA to form malonyl-CoA. The polypeptide is Acetyl-coenzyme A carboxylase carboxyl transferase subunit alpha (Chlorobium phaeobacteroides (strain DSM 266 / SMG 266 / 2430)).